We begin with the raw amino-acid sequence, 461 residues long: Ig heavy chain C region, membrane-bound form (461 aa).

The interval 1–99 (ATPSPPTLYG…GESVWIKEIP (99 aa)) is CH1. Residues 100 to 205 (DCKGDKVHPT…TQSRNITGSQ (106 aa)) form a CH2 region. N-linked (GlcNAc...) asparagine glycosylation is found at N164, N200, N245, N275, N374, N411, N415, and N437. The CH3 stretch occupies residues 206-308 (VPCSCNDPVI…PLRASIHKEE (103 aa)). The segment at 309–418 (VKDLREPSVS…IINRTVNKSS (110 aa)) is CH4. A helical membrane pass occupies residues 438–458 (ASTFIILFFLSIFYRAAVTLV).

Its subcellular location is the cell membrane. This is Ig heavy chain C region, membrane-bound form from Heterodontus francisci (Horn shark).